Consider the following 237-residue polypeptide: Large ribosomal subunit protein uL2 (237 aa).

The interval F202–R237 is disordered. Positions K225–R237 are enriched in basic residues.

Belongs to the universal ribosomal protein uL2 family. Part of the 50S ribosomal subunit. Forms a bridge to the 30S subunit in the 70S ribosome.

In terms of biological role, one of the primary rRNA binding proteins. Required for association of the 30S and 50S subunits to form the 70S ribosome, for tRNA binding and peptide bond formation. It has been suggested to have peptidyltransferase activity; this is somewhat controversial. Makes several contacts with the 16S rRNA in the 70S ribosome. The chain is Large ribosomal subunit protein uL2 from Methanococcoides burtonii (strain DSM 6242 / NBRC 107633 / OCM 468 / ACE-M).